Consider the following 189-residue polypeptide: uncharacterized protein (189 aa).

The next 5 helical transmembrane spans lie at alanine 4–arginine 21, alanine 34–leucine 56, leucine 79–serine 101, arginine 122–asparagine 144, and isoleucine 148–valine 170.

The protein resides in the cell membrane. This is an uncharacterized protein from Archaeoglobus fulgidus (strain ATCC 49558 / DSM 4304 / JCM 9628 / NBRC 100126 / VC-16).